A 326-amino-acid chain; its full sequence is Mitochondrial substrate carrier family protein R (326 aa).

3 Solcar repeats span residues 9-95 (TSPM…LKNN), 101-214 (KSSV…FKRI), and 226-318 (VIGI…LCDY). 6 consecutive transmembrane segments (helical) span residues 12-32 (MVTLLAGGVSGVIAKSTIAPL), 64-84 (LAGLWKGNTATILRIFPYSAI), 104-124 (VQIFIAGSLGFSCAILLTYPL), 185-205 (GIWRGILPTLYGSIPYAGVGY), 226-246 (VIGIYKLISGGVAGGLGQTAA), and 290-310 (LFKGISINYIKVIPTNGVAFL).

Belongs to the mitochondrial carrier (TC 2.A.29) family.

It is found in the mitochondrion inner membrane. Its function is as follows. Mitochondrial solute carriers shuttle metabolites, nucleotides, and cofactors through the mitochondrial inner membrane. May be involved in the accumulation of coenzyme A in the mitochondrial matrix. This Dictyostelium discoideum (Social amoeba) protein is Mitochondrial substrate carrier family protein R (mcfR).